The sequence spans 479 residues: Aldehyde dehydrogenase family 3 member B3 (479 aa).

Residues glutamate 223 and cysteine 257 contribute to the active site. A lipid anchor (S-geranylgeranyl cysteine) is attached at cysteine 476. A propeptide spans 477–479 (removed in mature form); the sequence is TLL.

The protein belongs to the aldehyde dehydrogenase family. In terms of processing, geranylgeranylation is important for membrane localization and enzyme activity. As to expression, expressed in testis, kidney, small intestine, spleen, white adipose tissue, liver and lung.

It is found in the cell membrane. It catalyses the reaction an aldehyde + NAD(+) + H2O = a carboxylate + NADH + 2 H(+). The catalysed reaction is hexadecanoate + NADH + 2 H(+) = hexadecanal + NAD(+) + H2O. It carries out the reaction octanal + NAD(+) + H2O = octanoate + NADH + 2 H(+). Functionally, oxidizes medium and long chain aldehydes into non-toxic fatty acids. The chain is Aldehyde dehydrogenase family 3 member B3 from Mus musculus (Mouse).